Consider the following 402-residue polypeptide: MDALRAMWKGTISFGLVTIPVKLYAATESKDLRFNLLHEPCQTPVQYRKYCPTCEREVESGEIVKGYEFDRGRYVTLRDEDFESIPLAARRTLEIVAFVRLEEIDPIYFDKTYYLEPGEGGAKAYGLLRHAMEVTGRVAIARVVLRAKESLAALRVFREGVLAMETMHFPDEVRPVAALTGIAQPELRPQEIEMATGLIESLTMPFSPERFENTYREALLELIQAKIAGAPPAEPGPAPEQGRVVDLMEALRASIRAAEAQRAAGGATGGAAGADGTPPAPVARSPEAPARRAIPGLPGDPAASVPGVPAAPVPRAPGVTGAPTPGTPPAAVPGVPATAVPGTPGAPVPTAPGVPSAPAPGTSPTSVPGVQTAPNGAAPPGPFAGSDRAAEVGPDETAPGGP.

One can recognise a Ku domain in the interval 12 to 185; that stretch reads ISFGLVTIPV…VAALTGIAQP (174 aa). Residues 261-402 are disordered; the sequence is QRAAGGATGG…GPDETAPGGP (142 aa). Composition is skewed to low complexity over residues 299 to 308 and 332 to 343; these read GDPAASVPGV and VPGVPATAVPGT. Pro residues predominate over residues 344 to 358; that stretch reads PGAPVPTAPGVPSAP. Residues 359–376 are compositionally biased toward low complexity; that stretch reads APGTSPTSVPGVQTAPNG.

The protein belongs to the prokaryotic Ku family. Homodimer. Interacts with LigD.

Its function is as follows. With LigD forms a non-homologous end joining (NHEJ) DNA repair enzyme, which repairs dsDNA breaks with reduced fidelity. Binds linear dsDNA with 5'- and 3'- overhangs but not closed circular dsDNA nor ssDNA. Recruits and stimulates the ligase activity of LigD. This Symbiobacterium thermophilum (strain DSM 24528 / JCM 14929 / IAM 14863 / T) protein is Non-homologous end joining protein Ku.